The chain runs to 146 residues: Leghemoglobin Lb120-8 (146 aa).

The Globin domain maps to 2 to 146; that stretch reads GFTEKQEALV…LASAIKKAMN (145 aa). A nitrated tyrosine mark is found at Y24 and Y29. Residue S44 coordinates heme b. Residue S44 is modified to Phosphoserine. H61 contacts O2. The heme b site is built by K64, H93, and K96. Y134 bears the Nitrated tyrosine mark.

This sequence belongs to the plant globin family. In terms of assembly, monomer. In terms of processing, nitrated in effective nodules and particularly in hypoxic conditions; this mechanism may play a protective role in the symbiosis by buffering toxic peroxynitrite NO(2)(-). Nitration level decrease during nodule senescence. Post-translationally, phosphorylation at Ser-44 disrupts the molecular environment of its porphyrin ring oxygen binding pocket, thus leading to a reduced oxygen consumption and to the delivery of oxygen O(2) to symbiosomes. As to expression, root nodules.

Its subcellular location is the cytoplasm. The protein localises to the cytosol. It localises to the nucleus. Functionally, leghemoglobin that reversibly binds oxygen O(2) through a pentacoordinated heme iron. In root nodules, facilitates the diffusion of oxygen to the bacteroids while preventing the bacterial nitrogenase from being inactivated by buffering dioxygen, nitric oxide and carbon monoxide, and promoting the formation of reactive oxygen species (ROS, e.g. H(2)O(2)). This role is essential for symbiotic nitrogen fixation (SNF). The protein is Leghemoglobin Lb120-8 of Pisum sativum (Garden pea).